Consider the following 243-residue polypeptide: Zinc import ATP-binding protein ZnuC (243 aa).

The region spanning 4–219 (ITVENLSVRY…PEYRALFGTG (216 aa)) is the ABC transporter domain. 36 to 43 (GPNGSGKT) contributes to the ATP binding site.

It belongs to the ABC transporter superfamily. Zinc importer (TC 3.A.1.15.5) family. In terms of assembly, the complex is composed of two ATP-binding proteins (ZnuC), two transmembrane proteins (ZnuB) and a solute-binding protein (ZnuA).

The protein localises to the cell inner membrane. It catalyses the reaction Zn(2+)(out) + ATP(in) + H2O(in) = Zn(2+)(in) + ADP(in) + phosphate(in) + H(+)(in). Functionally, part of the ABC transporter complex ZnuABC involved in zinc import. Responsible for energy coupling to the transport system. The sequence is that of Zinc import ATP-binding protein ZnuC from Jannaschia sp. (strain CCS1).